Consider the following 186-residue polypeptide: Transposon Tn21 resolvase (186 aa).

Residues 4-137 (QRIGYIRVST…EGIALAKQRG (134 aa)) enclose the Resolvase/invertase-type recombinase catalytic domain. The active-site O-(5'-phospho-DNA)-serine intermediate is Ser12. Positions 164-183 (KTKLAREFGISRETLYQYLR) form a DNA-binding region, H-T-H motif.

Belongs to the site-specific recombinase resolvase family.

Functionally, resolvase catalyzes the resolution (a site-specific recombination) of the cointegrated replicon to yield the final transposition products. The polypeptide is Transposon Tn21 resolvase (tnpR) (Escherichia coli).